Reading from the N-terminus, the 466-residue chain is 3-isopropylmalate dehydratase large subunit (466 aa).

[4Fe-4S] cluster contacts are provided by Cys347, Cys407, and Cys410.

Belongs to the aconitase/IPM isomerase family. LeuC type 1 subfamily. As to quaternary structure, heterodimer of LeuC and LeuD. The cofactor is [4Fe-4S] cluster.

It carries out the reaction (2R,3S)-3-isopropylmalate = (2S)-2-isopropylmalate. The protein operates within amino-acid biosynthesis; L-leucine biosynthesis; L-leucine from 3-methyl-2-oxobutanoate: step 2/4. Functionally, catalyzes the isomerization between 2-isopropylmalate and 3-isopropylmalate, via the formation of 2-isopropylmaleate. The chain is 3-isopropylmalate dehydratase large subunit from Shewanella sediminis (strain HAW-EB3).